The following is a 202-amino-acid chain: Tetratricopeptide repeat protein 36 (202 aa).

3 TPR repeats span residues 49 to 82 (AQDLERDGVKAAESEDMATAILKFSEAIALLPER), 83 to 116 (ASAYNNRAQALRLQGDVKGALEDLNQAVELSGIA), and 121 to 154 (RQALVQRGLILRLQGKDDEARKDFQRAAQLGSDF).

The protein belongs to the TTC36 family.

The chain is Tetratricopeptide repeat protein 36 (ttc36) from Xenopus tropicalis (Western clawed frog).